The primary structure comprises 274 residues: Oxidized low-density lipoprotein receptor 1 (274 aa).

The segment covering 1 to 16 (MAVDDLKVKPMKDQPD) has biased composition (basic and acidic residues). The disordered stretch occupies residues 1–25 (MAVDDLKVKPMKDQPDQKSNGKKPK). Residues 1-31 (MAVDDLKVKPMKDQPDQKSNGKKPKGLRFLS) are Cytoplasmic-facing. Residues 32–54 (SPWWCPAAVALGVLCLGSLMTII) form a helical; Signal-anchor for type II membrane protein membrane-spanning segment. 2 S-palmitoyl cysteine lipidation sites follow: cysteine 36 and cysteine 46. Residues 55 to 150 (MLGMQLLQVS…SGPCPEDWLW (96 aa)) form a neck region. Residues 55–274 (MLGMQLLQVS…QKKANLLRSE (220 aa)) lie on the Extracellular side of the membrane. 2 N-linked (GlcNAc...) asparagine glycosylation sites follow: asparagine 73 and asparagine 139. Residues 84–139 (QVLAQQQAEAASQESQRELKEMIETLAKRLDEKSKKQMELNHQYLNLQEALKRMDN) are a coiled coil. 3 disulfide bridges follow: cysteine 144-cysteine 155, cysteine 172-cysteine 264, and cysteine 243-cysteine 256. One can recognise a C-type lectin domain in the interval 151–265 (HGKNCYLFSS…CILVAYSICQ (115 aa)).

Homodimer; disulfide-linked. May form a hexamer composed of 3 homodimers. Interacts with HSP70. Post-translationally, N-glycosylated.

The protein resides in the cell membrane. It localises to the membrane raft. It is found in the secreted. Its function is as follows. Receptor that mediates the recognition, internalization and degradation of oxidatively modified low density lipoprotein (oxLDL) by vascular endothelial cells. OxLDL is a marker of atherosclerosis that induces vascular endothelial cell activation and dysfunction, resulting in pro-inflammatory responses, pro-oxidative conditions and apoptosis. Its association with oxLDL induces the activation of NF-kappa-B through an increased production of intracellular reactive oxygen and a variety of pro-atherogenic cellular responses including a reduction of nitric oxide (NO) release, monocyte adhesion and apoptosis. In addition to binding oxLDL, it acts as a receptor for the HSP70 protein involved in antigen cross-presentation to naive T-cells in dendritic cells, thereby participating in cell-mediated antigen cross-presentation. Also involved in inflammatory process, by acting as a leukocyte-adhesion molecule at the vascular interface in endotoxin-induced inflammation. Also acts as a receptor for advanced glycation end (AGE) products, activated platelets, monocytes, apoptotic cells and both Gram-negative and Gram-positive bacteria. This is Oxidized low-density lipoprotein receptor 1 (OLR1) from Oryctolagus cuniculus (Rabbit).